The following is a 399-amino-acid chain: Succinate--CoA ligase [ADP-forming] subunit beta (399 aa).

The 246-residue stretch at 9–254 folds into the ATP-grasp domain; it reads KAVLQPFGVS…TTEEDAKEIE (246 aa). Residues Lys46, 53–55, Glu109, Ser112, and Glu117 contribute to the ATP site; that span reads GRG. Mg(2+)-binding residues include Asn209 and Asp223. Substrate-binding positions include Asn274 and 331–333; that span reads GIM.

The protein belongs to the succinate/malate CoA ligase beta subunit family. Heterotetramer of two alpha and two beta subunits. It depends on Mg(2+) as a cofactor.

It carries out the reaction succinate + ATP + CoA = succinyl-CoA + ADP + phosphate. The catalysed reaction is GTP + succinate + CoA = succinyl-CoA + GDP + phosphate. Its pathway is carbohydrate metabolism; tricarboxylic acid cycle; succinate from succinyl-CoA (ligase route): step 1/1. In terms of biological role, succinyl-CoA synthetase functions in the citric acid cycle (TCA), coupling the hydrolysis of succinyl-CoA to the synthesis of either ATP or GTP and thus represents the only step of substrate-level phosphorylation in the TCA. The beta subunit provides nucleotide specificity of the enzyme and binds the substrate succinate, while the binding sites for coenzyme A and phosphate are found in the alpha subunit. This Rhodopseudomonas palustris (strain BisA53) protein is Succinate--CoA ligase [ADP-forming] subunit beta.